We begin with the raw amino-acid sequence, 131 residues long: uncharacterized protein (131 aa).

Positions 8–124 constitute a Response regulatory domain; that stretch reads DILVVDDDPD…ELIRLVQQYC (117 aa). Aspartate 57 bears the 4-aspartylphosphate mark.

This is an uncharacterized protein from Leptolyngbya boryana (Plectonema boryanum).